We begin with the raw amino-acid sequence, 313 residues long: Porphobilinogen deaminase (313 aa).

An S-(dipyrrolylmethanemethyl)cysteine modification is found at Cys242.

This sequence belongs to the HMBS family. As to quaternary structure, monomer. Requires dipyrromethane as cofactor.

It catalyses the reaction 4 porphobilinogen + H2O = hydroxymethylbilane + 4 NH4(+). It participates in porphyrin-containing compound metabolism; protoporphyrin-IX biosynthesis; coproporphyrinogen-III from 5-aminolevulinate: step 2/4. Its function is as follows. Tetrapolymerization of the monopyrrole PBG into the hydroxymethylbilane pre-uroporphyrinogen in several discrete steps. This is Porphobilinogen deaminase from Yersinia pestis bv. Antiqua (strain Angola).